Reading from the N-terminus, the 3987-residue chain is Hybrid PKS-NRPS synthetase buaA (3987 aa).

A Ketosynthase family 3 (KS3) domain is found at 5 to 438 (NEPIAIVGSG…GANAHAIVES (434 aa)). Active-site for beta-ketoacyl synthase activity residues include C176, H315, and H358. Positions 546–872 (VFTGQGAQWP…RNADDVESFS (327 aa)) are malonyl-CoA:ACP transacylase (MAT) domain. Residues 939–1072 (HELLGVRVDS…GAVRLQLGAA (134 aa)) are N-terminal hotdog fold. The 302-residue stretch at 939–1240 (HELLGVRVDS…VAPLVPVTQS (302 aa)) folds into the PKS/mFAS DH domain. The interval 940–1238 (ELLGVRVDSL…LQVAPLVPVT (299 aa)) is dehydratase (DH) domain. The active-site Proton acceptor; for dehydratase activity is H970. Residues 1087-1240 (MNDVNIEHFY…VAPLVPVTQS (154 aa)) form a C-terminal hotdog fold region. Catalysis depends on D1147, which acts as the Proton donor; for dehydratase activity. The interval 1399 to 1583 (YLANLVKQLS…TSTPSHDVFM (185 aa)) is methyltransferase (MT) domain. The tract at residues 2113-2285 (TYLLVGLTGE…LPGSVMNLAG (173 aa)) is ketoreductase (KR) domain. Positions 2397-2473 (RVLTNGLILT…AMVEDTMERM (77 aa)) constitute a Carrier 1 domain. O-(pantetheine 4'-phosphoryl)serine is present on S2433. Residues 2489-2561 (AADRPSAPSD…PPPSSVMSED (73 aa)) are disordered. The span at 2514–2525 (HNSEEQESHAME) shows a compositional bias: basic and acidic residues. The span at 2532 to 2550 (STTSGGECSSTKESSSSEA) shows a compositional bias: low complexity. Residues 2582–3001 (MGYGSLQFFF…QLVKMCAYME (420 aa)) form a condensation (C) domain region. Positions 3042-3448 (LDVAQARPEA…GQLYYEGRIA (407 aa)) are adenylation (A) (KR) domain. The 81-residue stretch at 3564–3644 (ADLSETELAL…AMALKIRNSQ (81 aa)) folds into the Carrier 2 domain. The residue at position 3604 (S3604) is an O-(pantetheine 4'-phosphoryl)serine. The reductase (R) domain stretch occupies residues 3680–3916 (TVVLTGATGY…TGIAAAAVGA (237 aa)).

In the C-terminal section; belongs to the NRP synthetase family.

Its pathway is mycotoxin biosynthesis. In terms of biological role, hybrid PKS-NRPS synthetase; part of the gene cluster that mediates the biosynthesis of burnettramic acids, an unusual class of bolaamphiphilic pyrrolizidinediones that display potent antibacterial, antifungal, and cytotoxic activities. The first step of the biosynthesis of burnettramic acids is the hydroxylation of proline by the proline hydroxylase buaE to generate 4-hydroxyproline. The PKS-NRPS buaA and trans-enoyl reductase buaC construct the highly reduced polyketide chain, and the condensation (C) domain of buaA then catalyzes the amide bond formation with the activated 4-hydroxyproline. This is followed by the R domain releasing the nascent polyketide-peptide directly via a Dieckmann condensation to afford a tetramic acid fused to the hydroxyproline, generating the bicyclic pyrrolidinedione moiety. The cytochrome P450 monooxygenases buaD and buaG are likely responsible for the multiple hydroxylations on the polyketide chain and its terminus, although in a heterologous context, buaD does not appear to be required. Therefore, while buaG may be a multifunctional cytochrome P450 monooxygenase, it cannot be ruled out that the two secondary alcohols on the polyketide chain could have an acetate origin. Finally, the glycosyltransferase buaB transfers beta-D-mannose to the aglycone burnettramic acid A to form burnettramic acid A. Burnettramic acid B is a minor cis-pyrrolizidine epimer of burnettramic acid A and it is likely that small amounts of it form naturally in acidic environments. The sequence is that of Hybrid PKS-NRPS synthetase buaA from Petromyces alliaceus (Aspergillus alliaceus).